The sequence spans 320 residues: ATP-dependent 6-phosphofructokinase (320 aa).

Gly-12 provides a ligand contact to ATP. 22 to 26 (RGVVR) is a binding site for ADP. ATP is bound by residues 73–74 (RF) and 103–106 (GDGS). Asp-104 is a Mg(2+) binding site. 126–128 (TID) is a substrate binding site. Residue Asp-128 is the Proton acceptor of the active site. Arg-155 lines the ADP pocket. Substrate contacts are provided by residues Arg-163 and 170–172 (MGR). ADP contacts are provided by residues 186-188 (GCE), Lys-212, and 214-216 (KKH). Substrate-binding positions include Glu-223, Arg-244, and 250–253 (HIQR).

The protein belongs to the phosphofructokinase type A (PFKA) family. ATP-dependent PFK group I subfamily. Prokaryotic clade 'B1' sub-subfamily. As to quaternary structure, homotetramer. Mg(2+) is required as a cofactor.

The protein localises to the cytoplasm. It carries out the reaction beta-D-fructose 6-phosphate + ATP = beta-D-fructose 1,6-bisphosphate + ADP + H(+). The protein operates within carbohydrate degradation; glycolysis; D-glyceraldehyde 3-phosphate and glycerone phosphate from D-glucose: step 3/4. With respect to regulation, allosterically activated by ADP and other diphosphonucleosides, and allosterically inhibited by phosphoenolpyruvate. In terms of biological role, catalyzes the phosphorylation of D-fructose 6-phosphate to fructose 1,6-bisphosphate by ATP, the first committing step of glycolysis. This is ATP-dependent 6-phosphofructokinase from Aliivibrio salmonicida (strain LFI1238) (Vibrio salmonicida (strain LFI1238)).